A 198-amino-acid polypeptide reads, in one-letter code: Ribonuclease HII (198 aa).

The RNase H type-2 domain occupies 10–198 (QLVAGVDEVG…PVKRALGLAS (189 aa)). The a divalent metal cation site is built by Asp-16, Glu-17, and Asp-108.

Belongs to the RNase HII family. The cofactor is Mn(2+). Requires Mg(2+) as cofactor.

The protein resides in the cytoplasm. It carries out the reaction Endonucleolytic cleavage to 5'-phosphomonoester.. Functionally, endonuclease that specifically degrades the RNA of RNA-DNA hybrids. In Escherichia coli O45:K1 (strain S88 / ExPEC), this protein is Ribonuclease HII.